The following is a 686-amino-acid chain: Envelope glycoprotein H (686 aa).

A signal peptide spans 1–24; it reads MPASSVRLPLRLLTLAGLLALAGA. At 25–646 the chain is on the virion surface side; sequence AALARGAPQG…TSTRLAPVSP (622 aa). N-linked (GlcNAc...) asparagine; by host glycosylation is found at asparagine 77, asparagine 162, asparagine 542, asparagine 604, and asparagine 627. The interaction with gL stretch occupies residues 157–217; that stretch reads PAAVFNVTLG…PPAGRFHVYT (61 aa). The helical transmembrane segment at 647–667 threads the bilayer; it reads AYVVASVVGAAITVGILYALF. At 668–686 the chain is on the intravirion side; that stretch reads KMLCSFSSEGYSRLINARS.

Belongs to the herpesviridae glycoprotein H family. Interacts with glycoprotein L (gL); this interaction is necessary for the correct processing and cell surface expression of gH. The heterodimer gH/gL seems to interact with gB trimers during fusion. N-glycosylated, O-glycosylated, and sialylated.

The protein localises to the virion membrane. The protein resides in the host cell membrane. It is found in the host endosome membrane. Its function is as follows. The heterodimer glycoprotein H-glycoprotein L is required for the fusion of viral and plasma membranes leading to virus entry into the host cell. Following initial binding to host receptor, membrane fusion is mediated by the fusion machinery composed of gB and the heterodimer gH/gL. May also be involved in the fusion between the virion envelope and the outer nuclear membrane during virion morphogenesis. In Suid herpesvirus 1 (strain Rice) (SuHV-1), this protein is Envelope glycoprotein H.